Here is a 426-residue protein sequence, read N- to C-terminus: Chaperone SurA (426 aa).

The N-terminal stretch at 1–19 (MGRVLVTIFVLFWPIGSFA) is a signal peptide. 2 consecutive PpiC domains span residues 169-270 (DAQY…KLLD) and 280-379 (VTQT…QVLD).

It localises to the periplasm. It carries out the reaction [protein]-peptidylproline (omega=180) = [protein]-peptidylproline (omega=0). Functionally, chaperone involved in the correct folding and assembly of outer membrane proteins. Recognizes specific patterns of aromatic residues and the orientation of their side chains, which are found more frequently in integral outer membrane proteins. May act in both early periplasmic and late outer membrane-associated steps of protein maturation. The polypeptide is Chaperone SurA (Nitrosococcus oceani (strain ATCC 19707 / BCRC 17464 / JCM 30415 / NCIMB 11848 / C-107)).